Reading from the N-terminus, the 114-residue chain is Histone H3-5 (114 aa).

A disordered region spans residues 1–29; it reads NTGAKAPRKQLANKAARKSTNVNAVSGVK.

Belongs to the histone H3 family. The nucleosome is a histone octamer containing two molecules each of H2A, H2B, H3 and H4 assembled in one H3-H4 heterotetramer and two H2A-H2B heterodimers. The octamer wraps approximately 147 bp of DNA.

The protein localises to the nucleus. The protein resides in the chromosome. Its function is as follows. Core component of nucleosome. Nucleosomes wrap and compact DNA into chromatin, limiting DNA accessibility to the cellular machineries which require DNA as a template. Histones thereby play a central role in transcription regulation, DNA repair, DNA replication and chromosomal stability. DNA accessibility is regulated via a complex set of post-translational modifications of histones, also called histone code, and nucleosome remodeling. This Stylonychia lemnae (Ciliate) protein is Histone H3-5 (H3-5).